The sequence spans 359 residues: Putative transposase y4uE (359 aa).

Disordered regions lie at residues 1-31 (MGDG…APGG) and 318-359 (HYAH…EEAA).

The protein belongs to the transposase 9 family.

The polypeptide is Putative transposase y4uE (Sinorhizobium fredii (strain NBRC 101917 / NGR234)).